Here is a 125-residue protein sequence, read N- to C-terminus: Small ribosomal subunit protein uS12 (125 aa).

Residue aspartate 89 is modified to 3-methylthioaspartic acid.

The protein belongs to the universal ribosomal protein uS12 family. In terms of assembly, part of the 30S ribosomal subunit. Contacts proteins S8 and S17. May interact with IF1 in the 30S initiation complex.

With S4 and S5 plays an important role in translational accuracy. In terms of biological role, interacts with and stabilizes bases of the 16S rRNA that are involved in tRNA selection in the A site and with the mRNA backbone. Located at the interface of the 30S and 50S subunits, it traverses the body of the 30S subunit contacting proteins on the other side and probably holding the rRNA structure together. The combined cluster of proteins S8, S12 and S17 appears to hold together the shoulder and platform of the 30S subunit. In Clostridium novyi (strain NT), this protein is Small ribosomal subunit protein uS12.